The following is a 116-amino-acid chain: MKKKLNTKKENNNFYILVNDLFLKIEDNLNLYENEIDIDYEIQDYVMTITFSNKTLIIINKQEPLQQIWLATMQNGYHFDYKNNQWICNRSNKNFWEIFENACSIQSNKDLIFCKK.

The protein belongs to the frataxin family.

Its function is as follows. Involved in iron-sulfur (Fe-S) cluster assembly. May act as a regulator of Fe-S biogenesis. This chain is Iron-sulfur cluster assembly protein CyaY, found in Buchnera aphidicola subsp. Acyrthosiphon pisum (strain APS) (Acyrthosiphon pisum symbiotic bacterium).